The sequence spans 129 residues: Lysozyme C (129 aa).

Residues 1-129 (KIYTRCELAA…VSKWIKDCKL (129 aa)) form the C-type lysozyme domain. Cystine bridges form between Cys6/Cys127, Cys30/Cys115, Cys64/Cys80, and Cys76/Cys94. Active-site residues include Glu35 and Asp52.

Belongs to the glycosyl hydrolase 22 family. In terms of assembly, monomer.

It localises to the secreted. It carries out the reaction Hydrolysis of (1-&gt;4)-beta-linkages between N-acetylmuramic acid and N-acetyl-D-glucosamine residues in a peptidoglycan and between N-acetyl-D-glucosamine residues in chitodextrins.. In terms of biological role, lysozymes have primarily a bacteriolytic function; those in tissues and body fluids are associated with the monocyte-macrophage system and enhance the activity of immunoagents. The sequence is that of Lysozyme C (LYZ) from Crax fasciolata (Bare-faced curassow).